The primary structure comprises 484 residues: Antibiotic efflux pump outer membrane protein ArpC (484 aa).

Positions 1 to 17 (MTKSLLSLAVTAFILGG) are cleaved as a signal peptide. Residue Cys18 is the site of N-palmitoyl cysteine attachment. Cys18 is lipidated: S-diacylglycerol cysteine.

The protein belongs to the outer membrane factor (OMF) (TC 1.B.17) family.

It localises to the cell outer membrane. The outer membrane component of an antibiotic efflux pump. Confers resistance to numerous structurally unrelated antibiotics such as carbenicillin, chloramphenicol, erythromycin, novobiocin, streptomycin and tetracycline. Is not involved in organic solvent efflux. This Pseudomonas putida (Arthrobacter siderocapsulatus) protein is Antibiotic efflux pump outer membrane protein ArpC (arpC).